Here is a 214-residue protein sequence, read N- to C-terminus: Thymidylate kinase (214 aa).

12-19 serves as a coordination point for ATP; sequence GGEGAGKS.

The protein belongs to the thymidylate kinase family.

It carries out the reaction dTMP + ATP = dTDP + ADP. Its function is as follows. Phosphorylation of dTMP to form dTDP in both de novo and salvage pathways of dTTP synthesis. This is Thymidylate kinase from Gluconobacter oxydans (strain 621H) (Gluconobacter suboxydans).